The chain runs to 244 residues: Putative lipoprotein LprA (244 aa).

The first 24 residues, 1-24, serve as a signal peptide directing secretion; it reads MKHPPCSVVAAATAILAVVLAIGG. Cysteine 25 is lipidated: N-palmitoyl cysteine. Cysteine 25 is lipidated: S-diacylglycerol cysteine.

Belongs to the LppX/LprAFG lipoprotein family.

It is found in the cell membrane. The sequence is that of Putative lipoprotein LprA (lprA) from Mycobacterium tuberculosis (strain CDC 1551 / Oshkosh).